The following is a 92-amino-acid chain: Small ribosomal subunit protein uS19 (92 aa).

This sequence belongs to the universal ribosomal protein uS19 family.

Protein S19 forms a complex with S13 that binds strongly to the 16S ribosomal RNA. The sequence is that of Small ribosomal subunit protein uS19 from Francisella tularensis subsp. tularensis (strain FSC 198).